Reading from the N-terminus, the 398-residue chain is tRNA-specific 2-thiouridylase MnmA (398 aa).

Residues 19–26 (AMSGGVDS) and Leu45 contribute to the ATP site. The active-site Nucleophile is Cys113. Residues Cys113 and Cys210 are joined by a disulfide bond. Position 137 (Gly137) interacts with ATP. Residues 160–162 (RDQ) form an interaction with tRNA region. The Cysteine persulfide intermediate role is filled by Cys210.

The protein belongs to the MnmA/TRMU family.

It localises to the cytoplasm. It carries out the reaction S-sulfanyl-L-cysteinyl-[protein] + uridine(34) in tRNA + AH2 + ATP = 2-thiouridine(34) in tRNA + L-cysteinyl-[protein] + A + AMP + diphosphate + H(+). Its function is as follows. Catalyzes the 2-thiolation of uridine at the wobble position (U34) of tRNA, leading to the formation of s(2)U34. This Rhodopseudomonas palustris (strain HaA2) protein is tRNA-specific 2-thiouridylase MnmA.